Reading from the N-terminus, the 324-residue chain is Ig gamma-1 chain C region secreted form (324 aa).

Residues 1–97 form a CH1 region; the sequence is AKTTPPSVYP…ASSTKVDKKI (97 aa). A disulfide bridge connects residues cysteine 27 and cysteine 82. The segment at 98-110 is hinge; the sequence is VPRDCGCKPCICT. The CH2 stretch occupies residues 111-217; sequence VPEVSSVFIF…PIEKTISKTK (107 aa). Intrachain disulfides connect cysteine 138–cysteine 198 and cysteine 244–cysteine 302. A glycan (N-linked (GlcNAc...) asparagine) is linked at asparagine 174. Residues 218-324 form a CH3 region; that stretch reads GRPKAPQVYT…EKSLSHSPGK (107 aa).

It is found in the secreted. The polypeptide is Ig gamma-1 chain C region secreted form (Ighg1) (Mus musculus (Mouse)).